Here is a 498-residue protein sequence, read N- to C-terminus: Sugar transport protein 2 (498 aa).

The Cytoplasmic portion of the chain corresponds to 1-22 (MAVGSMNVEEGTKAFPAKLTGQ). 12 helical membrane passes run 23–43 (VFLC…DIGI), 80–100 (LLQL…FISS), 117–137 (IFFL…MLIG), 140–160 (ILLG…ISEI), 167–187 (GGLN…ASYV), 200–220 (YSLG…FFIH), 288–308 (LQFF…PVLF), 320–340 (ISTV…LLVV), 348–368 (LLME…GILL), 381–401 (AVPL…AWSW), 421–441 (GYFC…QFFL), and 450–470 (LLFF…VFFL). Over 471–498 (PETKGVPIEEMAEKRWKTHPRWKKYFKD) the chain is Cytoplasmic.

It belongs to the major facilitator superfamily. Sugar transporter (TC 2.A.1.1) family. Pollen specific (at protein level).

The protein resides in the membrane. Mediates an active uptake of hexoses, probably by sugar/hydrogen symport. Can transport glucose, 3-O-methylglucose, xylose, mannose, fructose and galactose. In Arabidopsis thaliana (Mouse-ear cress), this protein is Sugar transport protein 2 (STP2).